Here is a 486-residue protein sequence, read N- to C-terminus: Siroheme synthase (486 aa).

The interval 1–204 is precorrin-2 dehydrogenase /sirohydrochlorin ferrochelatase; the sequence is MNYLPIFVDL…HQIEQAEALV (204 aa). NAD(+) is bound by residues 22 to 23 and 43 to 44; these read HV and EK. Phosphoserine is present on serine 128. A uroporphyrinogen-III C-methyltransferase region spans residues 216-486; it reads GEVSLVGAGP…NKETHWKQAA (271 aa). Proline 225 lines the S-adenosyl-L-methionine pocket. The active-site Proton acceptor is the aspartate 248. Lysine 270 serves as the catalytic Proton donor. S-adenosyl-L-methionine contacts are provided by residues 301–303, valine 306, 331–332, methionine 383, and glycine 412; these read GGD and TA.

This sequence in the N-terminal section; belongs to the precorrin-2 dehydrogenase / sirohydrochlorin ferrochelatase family. The protein in the C-terminal section; belongs to the precorrin methyltransferase family.

The catalysed reaction is uroporphyrinogen III + 2 S-adenosyl-L-methionine = precorrin-2 + 2 S-adenosyl-L-homocysteine + H(+). It carries out the reaction precorrin-2 + NAD(+) = sirohydrochlorin + NADH + 2 H(+). The enzyme catalyses siroheme + 2 H(+) = sirohydrochlorin + Fe(2+). It participates in cofactor biosynthesis; adenosylcobalamin biosynthesis; precorrin-2 from uroporphyrinogen III: step 1/1. It functions in the pathway cofactor biosynthesis; adenosylcobalamin biosynthesis; sirohydrochlorin from precorrin-2: step 1/1. Its pathway is porphyrin-containing compound metabolism; siroheme biosynthesis; precorrin-2 from uroporphyrinogen III: step 1/1. The protein operates within porphyrin-containing compound metabolism; siroheme biosynthesis; siroheme from sirohydrochlorin: step 1/1. It participates in porphyrin-containing compound metabolism; siroheme biosynthesis; sirohydrochlorin from precorrin-2: step 1/1. In terms of biological role, multifunctional enzyme that catalyzes the SAM-dependent methylations of uroporphyrinogen III at position C-2 and C-7 to form precorrin-2 via precorrin-1. Then it catalyzes the NAD-dependent ring dehydrogenation of precorrin-2 to yield sirohydrochlorin. Finally, it catalyzes the ferrochelation of sirohydrochlorin to yield siroheme. The polypeptide is Siroheme synthase (Actinobacillus pleuropneumoniae serotype 7 (strain AP76)).